A 546-amino-acid polypeptide reads, in one-letter code: uncharacterized protein (546 aa).

Transmembrane regions (helical) follow at residues Trp-106–Tyr-126, Thr-145–Leu-165, Phe-172–Ala-192, Tyr-231–Gly-251, Trp-263–Phe-283, Leu-332–Ile-352, Gly-375–Ile-395, Leu-416–Thr-436, Trp-444–Val-464, and Trp-510–Tyr-530.

Belongs to the major facilitator superfamily. CAR1 family.

It is found in the endoplasmic reticulum membrane. This is an uncharacterized protein from Schizosaccharomyces pombe (strain 972 / ATCC 24843) (Fission yeast).